The primary structure comprises 1510 residues: Chromosome partition protein MukB (1510 aa).

Residues 6 to 30 (ELENEIELESDEVIMENENVEEIVD) are a coiled coil. ATP is bound at residue 75-82 (GGNGAGKS). Coiled coils occupy residues 346 to 506 (QHRL…HKMS), 553 to 611 (QQTP…EDIS), 673 to 706 (MQSQ…RLSQ), 821 to 846 (SAAR…AQIA), 876 to 1064 (EALM…IQLQ), 1094 to 1149 (ERAR…RELV), and 1249 to 1304 (DAIE…LQNI). A flexible hinge region spans residues 707-824 (PDGSEDPRLN…EIPLFGSAAR (118 aa)).

It belongs to the SMC family. MukB subfamily. Homodimerization via its hinge domain. Binds to DNA via its C-terminal region. Interacts, and probably forms a ternary complex, with MukE and MukF via its C-terminal region. The complex formation is stimulated by calcium or magnesium. Interacts with tubulin-related protein FtsZ.

The protein localises to the cytoplasm. Its subcellular location is the nucleoid. Plays a central role in chromosome condensation, segregation and cell cycle progression. Functions as a homodimer, which is essential for chromosome partition. Involved in negative DNA supercoiling in vivo, and by this means organize and compact chromosomes. May achieve or facilitate chromosome segregation by condensation DNA from both sides of a centrally located replisome during cell division. This is Chromosome partition protein MukB from Haemophilus influenzae (strain PittGG).